The chain runs to 74 residues: Peptide ToAP4 (74 aa).

Residues 1-22 (MQIKHLITLFFLVLIVADQCSA) form the signal peptide. Lysine 39 bears the Lysine amide mark. Residues 40-74 (GGRRKREIAAQIEQYRDLQKREAELEELLDRLPMF) constitute a propeptide that is removed on maturation.

The protein belongs to the non-disulfide-bridged peptide (NDBP) superfamily. Short antimicrobial peptide (group 4) family. Expressed by the venom gland.

It is found in the secreted. Functionally, shows anti-inflammatory activities, since it decreases release of pro-inflammatory cytokines, and increases release of anti-inflammatory cytokines. Acts by blocking the Toll-like receptor 4 (TLR4). Also increases MHC-II expression in LPS-stimulated cells. Does not show antibacterial activity on Mycobacterium abscessus subsp. massiliense. Does not show antifungal activity. Has low hemolytic activity on human erythrocyte and low monocyte cytotoxicity. In vivo, does not induce immune cell migration. Helical wheel projections predict an amphipathic peptide with distinct hydrophobic and hydrophilic faces. The polypeptide is Peptide ToAP4 (Tityus obscurus (Amazonian scorpion)).